A 400-amino-acid chain; its full sequence is Mannitol-1-phosphate 5-dehydrogenase (400 aa).

12–23 lines the NAD(+) pocket; the sequence is AVHFGAGNIGRG. The active site involves lysine 221.

The protein belongs to the mannitol dehydrogenase family. In terms of assembly, monomer.

The enzyme catalyses D-mannitol 1-phosphate + NAD(+) = beta-D-fructose 6-phosphate + NADH + H(+). Its function is as follows. Catalyzes the NAD(H)-dependent interconversion of D-fructose 6-phosphate and D-mannitol 1-phosphate in the mannitol metabolic pathway. The chain is Mannitol-1-phosphate 5-dehydrogenase from Pyricularia oryzae (strain Y34) (Rice blast fungus).